A 710-amino-acid polypeptide reads, in one-letter code: Cyclomaltodextrin glucanotransferase (710 aa).

An N-terminal signal peptide occupies residues 1–27 (MKKTFKLILVLMLSLTLVFGLTAPIQA). Residues Asp-54, Asn-56, Asn-59, Asn-60, Gly-78, and Asp-80 each coordinate Ca(2+). Substrate is bound at residue 128 to 129 (YW). A Ca(2+)-binding site is contributed by Asn-167. Position 168 (His-168) interacts with substrate. Ile-218 is a binding site for Ca(2+). 221–224 (NLFD) is a substrate binding site. Asp-227 is a binding site for Ca(2+). Arg-255 contributes to the substrate binding site. Asp-257 (nucleophile) is an active-site residue. Residue 260–261 (KH) coordinates substrate. His-261 lines the Ca(2+) pocket. Residue Glu-285 is the Proton donor of the active site. Residues His-355, Asp-398, and Arg-402 each coordinate substrate. Residues 526–603 (PLIGHVGPTM…GATSNTYNNI (78 aa)) enclose the IPT/TIG domain. A CBM20 domain is found at 605–710 (ILTGNQICVR…TGTVIVNWQQ (106 aa)).

It belongs to the glycosyl hydrolase 13 family. The cofactor is Ca(2+).

Its subcellular location is the secreted. It carries out the reaction Cyclizes part of a (1-&gt;4)-alpha-D-glucan chain by formation of a (1-&gt;4)-alpha-D-glucosidic bond.. In terms of biological role, degrades starch to alpha-, beta-, and gamma-cyclodextrins, as well as linear sugars. This chain is Cyclomaltodextrin glucanotransferase (amyA), found in Thermoanaerobacterium thermosulfurigenes (Clostridium thermosulfurogenes).